Reading from the N-terminus, the 408-residue chain is Aminoacylase-1 (408 aa).

A Zn(2+)-binding site is contributed by His80. The active site involves Asp82. Asp113 provides a ligand contact to Zn(2+). Glu147 (proton acceptor) is an active-site residue. Glu148, Glu175, and His373 together coordinate Zn(2+).

The protein belongs to the peptidase M20A family. Homodimer. Interacts with SPHK1. Zn(2+) is required as a cofactor.

It localises to the cytoplasm. The catalysed reaction is an N-acyl-L-amino acid + H2O = an L-alpha-amino acid + a carboxylate. It catalyses the reaction N-acetyl-L-methionine + H2O = L-methionine + acetate. It carries out the reaction N-acetyl-L-glutamine + H2O = L-glutamine + acetate. Catalyzes the hydrolysis of N-acetylated amino acids to acetate and free amino acids. The chain is Aminoacylase-1 (Acy1) from Mus musculus (Mouse).